The sequence spans 98 residues: uncharacterized protein (98 aa).

The segment covering methionine 1–proline 21 has biased composition (low complexity). A disordered region spans residues methionine 1–aspartate 26. The chain crosses the membrane as a helical span at residues methionine 29 to cysteine 49.

The protein localises to the host membrane. This is an uncharacterized protein from Equine herpesvirus 2 (strain 86/87) (EHV-2).